The following is a 689-amino-acid chain: Elongation factor G (689 aa).

One can recognise a tr-type G domain in the interval 8 to 283; the sequence is SKCRNIGIMA…AVVDFLPAPN (276 aa). GTP contacts are provided by residues 17–24, 81–85, and 135–138; these read AHIDAGKT, DTPGH, and NKMD.

It belongs to the TRAFAC class translation factor GTPase superfamily. Classic translation factor GTPase family. EF-G/EF-2 subfamily.

Its subcellular location is the cytoplasm. Functionally, catalyzes the GTP-dependent ribosomal translocation step during translation elongation. During this step, the ribosome changes from the pre-translocational (PRE) to the post-translocational (POST) state as the newly formed A-site-bound peptidyl-tRNA and P-site-bound deacylated tRNA move to the P and E sites, respectively. Catalyzes the coordinated movement of the two tRNA molecules, the mRNA and conformational changes in the ribosome. The protein is Elongation factor G of Ehrlichia ruminantium (strain Welgevonden).